Consider the following 100-residue polypeptide: Small ribosomal subunit protein uS14c (100 aa).

This sequence belongs to the universal ribosomal protein uS14 family. In terms of assembly, part of the 30S ribosomal subunit.

It is found in the plastid. It localises to the chloroplast. Its function is as follows. Binds 16S rRNA, required for the assembly of 30S particles. The chain is Small ribosomal subunit protein uS14c from Oenothera argillicola (Appalachian evening primrose).